The primary structure comprises 304 residues: Porphobilinogen deaminase (304 aa).

At C240 the chain carries S-(dipyrrolylmethanemethyl)cysteine.

Belongs to the HMBS family. In terms of assembly, monomer. Dipyrromethane serves as cofactor.

It catalyses the reaction 4 porphobilinogen + H2O = hydroxymethylbilane + 4 NH4(+). It participates in porphyrin-containing compound metabolism; protoporphyrin-IX biosynthesis; coproporphyrinogen-III from 5-aminolevulinate: step 2/4. Its function is as follows. Tetrapolymerization of the monopyrrole PBG into the hydroxymethylbilane pre-uroporphyrinogen in several discrete steps. The sequence is that of Porphobilinogen deaminase from Xanthomonas campestris pv. campestris (strain ATCC 33913 / DSM 3586 / NCPPB 528 / LMG 568 / P 25).